Consider the following 962-residue polypeptide: Exportin-T (962 aa).

The residue at position 1 (Met1) is an N-acetylmethionine. Lys634 carries the N6-acetyllysine modification.

Found in a complex with XPOT, Ran and tRNA. Probably found in a complex with nucleoporins. Interacts with Ran and tRNA in a GTP-dependent manner.

Its subcellular location is the nucleus. It is found in the cytoplasm. Mediates the nuclear export of aminoacylated tRNAs. In the nucleus binds to tRNA and to the GTPase Ran in its active GTP-bound form. Docking of this trimeric complex to the nuclear pore complex (NPC) is mediated through binding to nucleoporins. Upon transit of a nuclear export complex into the cytoplasm, disassembling of the complex and hydrolysis of Ran-GTP to Ran-GDP (induced by RANBP1 and RANGAP1, respectively) cause release of the tRNA from the export receptor. XPOT then return to the nuclear compartment and mediate another round of transport. The directionality of nuclear export is thought to be conferred by an asymmetric distribution of the GTP- and GDP-bound forms of Ran between the cytoplasm and nucleus. In Pongo abelii (Sumatran orangutan), this protein is Exportin-T (XPOT).